Reading from the N-terminus, the 147-residue chain is Protein MC014 (147 aa).

Its subcellular location is the host nucleus. This Homo sapiens (Human) protein is Protein MC014 (MC014).